Reading from the N-terminus, the 520-residue chain is Beta-2-syntrophin (520 aa).

Residues 45–95 are disordered; sequence EPPAAAFNGLPNGGGGESLPGSPNRGLGPPSPPAPPRGPAGEASASPPVRR. A compositionally biased stretch (low complexity) spans 63–72; it reads LPGSPNRGLG. Residues 73 to 82 are compositionally biased toward pro residues; it reads PPSPPAPPRG. Phosphoserine occurs at positions 75, 90, 109, 191, 202, 213, 373, and 375. The segment covering 83-93 has biased composition (low complexity); sequence PAGEASASPPV. The PDZ domain occupies 95 to 178; sequence RVRVVKQEAG…EVLLEVKFIR (84 aa). 2 consecutive PH domains span residues 143–280 and 305–417; these read ILSV…TNIM and EVKH…QGCH. Residues 195 to 220 are disordered; the sequence is WEGASPQSPSFSGSEDSGSPKHQNTT. The segment covering 197-211 has biased composition (low complexity); it reads GASPQSPSFSGSEDS. Positions 464-520 constitute an SU domain; that stretch reads PFERLKMSADDGIRNLYLDFGGPEGELTMDLHSCPKPIVFVLHTFLSAKVTRMGLLV. A calmodulin-binding region spans residues 498–520; that stretch reads PKPIVFVLHTFLSAKVTRMGLLV.

This sequence belongs to the syntrophin family. In terms of assembly, monomer and homodimer. Interacts with the dystrophin protein DMD and related protein DTNA; and with the other members of the syntrophin family: SNTA1 and SNTB1. Interacts with the neuroregulin receptor ERBB4. Interacts with PTPRN when phosphorylated, protecting PTPRN from protein cleavage by CAPN1. Dephosphorylation upon insulin stimulation disrupts the interaction with PTPRN and results in the cleavage of PTPRN. Interacts with the sodium channel proteins SCN4A and SCN5A. Interacts with SAST, MAST205, microtubules and microtubule-associated proteins. Interacts with the dystrophin related protein UTRN. Interacts with DTNB. Phosphorylated. Partially dephosphorylated upon insulin stimulation. As to expression, ubiquitous. Expressed at high levels in the testis.

The protein localises to the membrane. The protein resides in the cytoplasmic vesicle. Its subcellular location is the secretory vesicle membrane. It is found in the cell junction. It localises to the cytoplasm. The protein localises to the cytoskeleton. In terms of biological role, adapter protein that binds to and probably organizes the subcellular localization of a variety of membrane proteins. May link various receptors to the actin cytoskeleton and the dystrophin glycoprotein complex. May play a role in the regulation of secretory granules via its interaction with PTPRN. The chain is Beta-2-syntrophin (Sntb2) from Mus musculus (Mouse).